The chain runs to 357 residues: Protein-arginine kinase (357 aa).

Positions 24 to 256 constitute a Phosphagen kinase C-terminal domain; sequence VIISSRVRLA…LQLVTQERAA (233 aa). ATP is bound by residues 27-31, H93, R127, 178-182, and 209-214; these read SSRVR, RASVM, and RGLYGE. The RDXXRA motif of the pArg binding pocket involved in allosteric regulation signature appears at 339 to 344; that stretch reads RDIFRA.

This sequence belongs to the ATP:guanido phosphotransferase family.

The catalysed reaction is L-arginyl-[protein] + ATP = N(omega)-phospho-L-arginyl-[protein] + ADP + H(+). Appears to be allosterically activated by the binding of pArg-containing polypeptides to the pArg-binding pocket localized in the C-terminal domain of McsB. Functionally, catalyzes the specific phosphorylation of arginine residues in proteins. In Desulforamulus reducens (strain ATCC BAA-1160 / DSM 100696 / MI-1) (Desulfotomaculum reducens), this protein is Protein-arginine kinase.